Consider the following 324-residue polypeptide: Phospho-N-acetylmuramoyl-pentapeptide-transferase (324 aa).

Helical transmembrane passes span 5 to 25 (GLLV…PLFI), 52 to 72 (PTMG…IMAI), 77 to 97 (LGAE…IGFL), 117 to 137 (LLGQ…QGFD), 147 to 167 (ITFD…IGGS), 176 to 196 (LDGL…IIAV), 202 to 222 (AVAI…VFNA), 227 to 247 (VFMG…VAIL), 253 to 273 (LLVI…IQVI), and 302 to 322 (VVVT…YIGV).

This sequence belongs to the glycosyltransferase 4 family. MraY subfamily. Mg(2+) serves as cofactor.

It localises to the cell membrane. It carries out the reaction UDP-N-acetyl-alpha-D-muramoyl-L-alanyl-gamma-D-glutamyl-meso-2,6-diaminopimeloyl-D-alanyl-D-alanine + di-trans,octa-cis-undecaprenyl phosphate = di-trans,octa-cis-undecaprenyl diphospho-N-acetyl-alpha-D-muramoyl-L-alanyl-D-glutamyl-meso-2,6-diaminopimeloyl-D-alanyl-D-alanine + UMP. Its pathway is cell wall biogenesis; peptidoglycan biosynthesis. Functionally, catalyzes the initial step of the lipid cycle reactions in the biosynthesis of the cell wall peptidoglycan: transfers peptidoglycan precursor phospho-MurNAc-pentapeptide from UDP-MurNAc-pentapeptide onto the lipid carrier undecaprenyl phosphate, yielding undecaprenyl-pyrophosphoryl-MurNAc-pentapeptide, known as lipid I. The chain is Phospho-N-acetylmuramoyl-pentapeptide-transferase from Bacillus cytotoxicus (strain DSM 22905 / CIP 110041 / 391-98 / NVH 391-98).